We begin with the raw amino-acid sequence, 1269 residues long: MEQTGPDVPERVGAMSGGWTAEQLEAISARGGDVLVAASAGTGKTAVLAERIIRRITDPIKPVDVDRLLVVTFTSAAAAEMRERIRLALAREISRRPESGHLQRQAALLGRACISTVHSFCLDLLRQHFYRIGLDPSFRVADETEAALIQTGALEEVFERRYAAEDNIFAALVDCYGGRHDDALLQELVLDAYKFARSTPWPEDWLDGLAEGFNLPGGASFDRTPWSAVLKQAAEIELAGARADLEAALRIAREPGGPQAYLANLEQEHDLVCRLLQSCRTNAPWAELYSYFKEVVFSPLKQCRKEDADLKLAGQARNFRESAKKKVMQVKSRYFSLPPEDLCADLRRMAPLIKELAGLVREFDATYRKAKAARGVVDFNDLEHYCLQVLAEKGPSGAVPSQVAHELQEKFVEVLVDEYQDINAVQETILQMVSRKGEGQSNLFMVGDVKQSIYRFRLAEPGLFLKKYASFSAGTGGGQGRRLALTANFRSRQGVVSAVNFIFKQIMTPAVGEMAYGSDAMLVYGADYPPVPEGQGNYEEAVELHLVERGPAGKDGGGDDPAGEEADGGVEAVEEIEEELEAGQKEARLVARRIKELLGGSPGGEHALEIYDRELKKYRPLTYRDVAVLLRATAGYANSFVEEFRREGIPAYAELSTGYFESTEVETVISLLKVIDNPRQDIPLAGVLRSPAVGLKAGDLARIRLASPRGDFYDAVVAASLAGQGELSERLADFLKKLEEWRTIARQGTLADLIWAVYRDTGYYDFTGCLPGGGQRQANLRALHDRARQFETTAFRGLFLFLRFIERLREGGRDFGAARLLSEKENVVRIMSIHKSKGLEFPVVFVAGLGRNFNFRNLNKAVLFHKDLGLGPQLVDAEARVTRPTAAKLALKHRLKMEALAEEMRILYVAMTRAQEKLILVGSARNLPGCARRWCGPAGTAGWALPDGFLAGAGTCLDWLMAALARHRDGAAIRELAACAEEPPAEVAADRSRWRVFFSDSRGRSAEMAEEPVLLAKVRRMEPLEPAGPLAGMIKARLEWSYPAIAVLGRPAKAAVTELKRRFDQLAAGEEQYGEGHFESFRLTAGRPLFMQEKRGLTAAEAGEALHLVMQHLDLTGSLDITAVRSQIEDMVWRELLTPEQAAAVPAEKIAAFFAGPLGRRLLAGFQVLRELPFTMAVQAAEIYPELVPYPGEAVLVQGVIDCLVDEGDGYLLLDYKTGKRPLGRPEEAARRYCGQLNIYARAVESILGRKVKEKYLYLFEPGLEIRCD.

A UvrD-like helicase ATP-binding domain is found at 17 to 492 (GGWTAEQLEA…LALTANFRSR (476 aa)). 38–45 (ASAGTGKT) lines the ATP pocket. The 298-residue stretch at 541–838 (AVELHLVERG…RIMSIHKSKG (298 aa)) folds into the UvrD-like helicase C-terminal domain.

This sequence belongs to the helicase family. AddA subfamily. In terms of assembly, heterodimer of AddA and AddB/RexB. It depends on Mg(2+) as a cofactor.

The enzyme catalyses Couples ATP hydrolysis with the unwinding of duplex DNA by translocating in the 3'-5' direction.. It catalyses the reaction ATP + H2O = ADP + phosphate + H(+). Functionally, the heterodimer acts as both an ATP-dependent DNA helicase and an ATP-dependent, dual-direction single-stranded exonuclease. Recognizes the chi site generating a DNA molecule suitable for the initiation of homologous recombination. The AddA nuclease domain is required for chi fragment generation; this subunit has the helicase and 3' -&gt; 5' nuclease activities. This Pelotomaculum thermopropionicum (strain DSM 13744 / JCM 10971 / SI) protein is ATP-dependent helicase/nuclease subunit A.